The primary structure comprises 435 residues: UDP-N-acetylmuramate--L-alanine ligase (435 aa).

ATP is bound at residue 108 to 114 (GAHGKST).

The protein belongs to the MurCDEF family.

Its subcellular location is the cytoplasm. The catalysed reaction is UDP-N-acetyl-alpha-D-muramate + L-alanine + ATP = UDP-N-acetyl-alpha-D-muramoyl-L-alanine + ADP + phosphate + H(+). Its pathway is cell wall biogenesis; peptidoglycan biosynthesis. Functionally, cell wall formation. This chain is UDP-N-acetylmuramate--L-alanine ligase, found in Campylobacter curvus (strain 525.92).